The primary structure comprises 320 residues: Heterogeneous nuclear ribonucleoprotein A1-like 3 (320 aa).

RRM domains are found at residues 14–97 and 105–184; these read RKLF…DSQR and KKIF…LSKQ. 2 disordered regions span residues 182 to 218 and 271 to 320; these read SKQE…NFGR and SNFG…GRRF. The span at 197-218 shows a compositional bias: gly residues; it reads SGSGNFGGGRGGGFGGNDNFGR. Low complexity predominate over residues 308–320; it reads SSSSSSYGSGRRF.

In Homo sapiens (Human), this protein is Heterogeneous nuclear ribonucleoprotein A1-like 3.